Reading from the N-terminus, the 1129-residue chain is DNA-directed RNA polymerase I subunit RPA2 (1129 aa).

The C4-type zinc-finger motif lies at 1061 to 1093; the sequence is CHKCGSILAPLQRIVKRNETGGLSSQPDTCRLC.

The protein belongs to the RNA polymerase beta chain family. In terms of assembly, component of the RNA polymerase I (Pol I) complex consisting of at least 13 subunits.

It is found in the nucleus. Its subcellular location is the nucleolus. The catalysed reaction is RNA(n) + a ribonucleoside 5'-triphosphate = RNA(n+1) + diphosphate. DNA-dependent RNA polymerase catalyzes the transcription of DNA into RNA using the four ribonucleoside triphosphates as substrates. Second largest core component of RNA polymerase I which synthesizes ribosomal RNA precursors. Proposed to contribute to the polymerase catalytic activity and forms the polymerase active center together with the largest subunit. Pol I is composed of mobile elements and RPA2 is part of the core element with the central large cleft and probably a clamp element that moves to open and close the cleft. The protein is DNA-directed RNA polymerase I subunit RPA2 of Drosophila melanogaster (Fruit fly).